We begin with the raw amino-acid sequence, 381 residues long: Succinyl-diaminopimelate desuccinylase 1 (381 aa).

His70 provides a ligand contact to Zn(2+). Asp72 is a catalytic residue. Asp103 provides a ligand contact to Zn(2+). The Proton acceptor role is filled by Glu136. Zn(2+) is bound by residues Glu137, Glu165, and His354.

It belongs to the peptidase M20A family. DapE subfamily. Homodimer. Zn(2+) serves as cofactor. Requires Co(2+) as cofactor.

The catalysed reaction is N-succinyl-(2S,6S)-2,6-diaminopimelate + H2O = (2S,6S)-2,6-diaminopimelate + succinate. It participates in amino-acid biosynthesis; L-lysine biosynthesis via DAP pathway; LL-2,6-diaminopimelate from (S)-tetrahydrodipicolinate (succinylase route): step 3/3. Functionally, catalyzes the hydrolysis of N-succinyl-L,L-diaminopimelic acid (SDAP), forming succinate and LL-2,6-diaminopimelate (DAP), an intermediate involved in the bacterial biosynthesis of lysine and meso-diaminopimelic acid, an essential component of bacterial cell walls. This chain is Succinyl-diaminopimelate desuccinylase 1, found in Ruegeria sp. (strain TM1040) (Silicibacter sp.).